A 184-amino-acid polypeptide reads, in one-letter code: ATP synthase subunit b, chloroplastic (184 aa).

Residues 27–49 (LATNPINLSVVLGVLIFFGKGVL) form a helical membrane-spanning segment.

It belongs to the ATPase B chain family. F-type ATPases have 2 components, F(1) - the catalytic core - and F(0) - the membrane proton channel. F(1) has five subunits: alpha(3), beta(3), gamma(1), delta(1), epsilon(1). F(0) has four main subunits: a(1), b(1), b'(1) and c(10-14). The alpha and beta chains form an alternating ring which encloses part of the gamma chain. F(1) is attached to F(0) by a central stalk formed by the gamma and epsilon chains, while a peripheral stalk is formed by the delta, b and b' chains.

It is found in the plastid. It localises to the chloroplast thylakoid membrane. In terms of biological role, f(1)F(0) ATP synthase produces ATP from ADP in the presence of a proton or sodium gradient. F-type ATPases consist of two structural domains, F(1) containing the extramembraneous catalytic core and F(0) containing the membrane proton channel, linked together by a central stalk and a peripheral stalk. During catalysis, ATP synthesis in the catalytic domain of F(1) is coupled via a rotary mechanism of the central stalk subunits to proton translocation. Functionally, component of the F(0) channel, it forms part of the peripheral stalk, linking F(1) to F(0). This is ATP synthase subunit b, chloroplastic from Citrus sinensis (Sweet orange).